The following is a 401-amino-acid chain: MELEPCSSSPERCKVCGDTGNGMHFGAFTCRACAAFFRRAASRKFLRKCENHLIFALKCKNCRLQRCYEAGMSSENFQFCRDLIGAKGAIPKLKVPKSFEQTVGRPYFVLQCDPEVLFLRRNIIDCVPLLEKAEKLIEFGSESPVFSKNRLLKLAQGLQQFQDAKSNQVKFVQKMGQKEIMSFFETDFLCATKWFTYLDEFQFLDKNQQLTLMQGIWHVWSRLHKLAVSAMGRRRGICDKNTVMVSHQNEFAVCDLNEIEVDMSWCTNFSNEQMRYFLDTSHDSYVYQVMDEMLGLKPNDVELSYMMCQLCLQYAGQRFQGEILEFCEKMLGFLADDLHSYYVKQLRMPNYAARLAKLMKINNRIKVDMLKMRQRQEISRVFDIWTIDFSHPEFIQDANAC.

A DNA-binding region (nuclear receptor) is located at residues 10 to 79 (PERCKVCGDT…AGMSSENFQF (70 aa)). 2 consecutive NR C4-type zinc fingers follow at residues 13-33 (CKVC…CRAC) and 49-67 (CENH…LQRC). The NR LBD domain occupies 132 to 398 (KAEKLIEFGS…FSHPEFIQDA (267 aa)).

Belongs to the nuclear hormone receptor family.

Its subcellular location is the nucleus. Functionally, orphan nuclear receptor. The sequence is that of Nuclear hormone receptor family member nhr-65 (nhr-65) from Caenorhabditis elegans.